We begin with the raw amino-acid sequence, 755 residues long: LIM domain and actin-binding protein 1 (755 aa).

The residue at position 1 (M1) is an N-acetylmethionine. A Phosphoserine modification is found at S15. The segment covering 43 to 56 (KAAEEANMERKKNN) has biased composition (basic and acidic residues). Residues 43-151 (KAAEEANMER…YPRSEDSHDF (109 aa)) form a disordered region. Residues 88–97 (DSLPNSSSDG) are compositionally biased toward polar residues. At S132 the chain carries Phosphoserine. Residues 164 to 166 (CLG) carry the Required for interaction with NPC1L1 motif. 2 stretches are compositionally biased toward basic and acidic residues: residues 168–177 (SRHEAEKPEM) and 199–208 (MMFEKGEHSQ). A disordered region spans residues 168–226 (SRHEAEKPEMSENTETSGKIEKYNVPLNRLKMMFEKGEHSQNKSPWTQGRNAGGRRLSE). Phosphoserine occurs at positions 225, 230, and 242. Positions 241-379 (LSSSAFNSEK…ESSPSKTAKK (139 aa)) are disordered. The span at 249 to 258 (EKNESKRNLE) shows a compositional bias: basic and acidic residues. S263 carries the phosphoserine modification. Residues 292 to 305 (KPSESKTHKWEQKE) show a composition bias toward basic and acidic residues. Positions 342 to 354 (CNSQGRSEAQQPI) are enriched in polar residues. Phosphoserine occurs at positions 348, 360, 367, and 372. Polar residues predominate over residues 363 to 375 (ARTSSLPESSPSK). The LIM zinc-binding domain occupies 386-446 (ESCVECQKTV…KPHFNQLFKS (61 aa)). An N6-succinyllysine modification is found at K437. 2 disordered regions span residues 468–493 (ENEE…GVED) and 505–714 (SMEA…DTTT). S488 is modified (phosphoserine). The required for interaction with MYO5B stretch occupies residues 491–511 (VEDAPIAKVGVLAASMEAKAS). 2 stretches are compositionally biased toward basic and acidic residues: residues 512 to 526 (SQRE…ETKK) and 555 to 566 (WPPEDEVCKTEA). Positions 599 to 611 (SSVKSPKPLSPSL) are enriched in low complexity. A phosphoserine mark is found at S600, S603, S608, and S616. 2 stretches are compositionally biased toward basic and acidic residues: residues 638–653 (RPSR…RWQS) and 662–673 (EAPRGRDGRSFE). S697, S722, and S737 each carry phosphoserine.

As to quaternary structure, interacts with NPC1L1; bridges NPC1L1 with MYO5B. Interacts with MYO5B; bridges MYO5B with NPC1L1. Interacts with PXN; this complex stabilizes actin dynamics. Interacts with F-actin and G-actin. Interacts with LUZP1 (via C-terminus); both proteins restrict ciliation and may work together to regulate this process. Binds RAB40B (GTP-bound); interaction influences LIMA1 subcellular localization in lamellipodia during cell migration. Phosphorylation of the C-terminal region by MAPK1/MAPK3 reduces its association with F-actin and contributes to actin filament reorganization and enhanced cell motility. In terms of processing, ubiquitinated by the ECS(RAB40B) complex leading to its degradation. As to expression, expressed throughout the kidney, including renal cortex, medulla, and glomeruli. Expressed in glomeruli, tubular epithelial cells, and extraglomerular vascular endothelial cells (at protein level).

It is found in the cytoplasm. It localises to the cell junction. The protein resides in the focal adhesion. Its subcellular location is the cytoskeleton. The protein localises to the stress fiber. It is found in the cell membrane. It localises to the cell projection. The protein resides in the ruffle. Its subcellular location is the lamellipodium. In terms of biological role, actin-binding protein involved in actin cytoskeleton regulation and dynamics. Increases the number and size of actin stress fibers and inhibits membrane ruffling. Inhibits actin filament depolymerization. Bundles actin filaments, delays filament nucleation and reduces formation of branched filaments. Acts as a negative regulator of primary cilium formation. Plays a role in cholesterol homeostasis. Influences plasma cholesterol levels through regulation of intestinal cholesterol absorption. May act as a scaffold protein by regulating NPC1L1 transportation, an essential protein for cholesterol absorption, to the plasma membrane by recruiting MYO5B to NPC1L1, and thus facilitates cholesterol uptake. The protein is LIM domain and actin-binding protein 1 of Rattus norvegicus (Rat).